The chain runs to 555 residues: Protein peste (555 aa).

Over 1–7 (MTSRTRH) the chain is Cytoplasmic. A helical membrane pass occupies residues 8–28 (CARLGIVLLGICCIASGIYLF). Residues 29–434 (RNWIDMFTRM…VRVSEEIAAD (406 aa)) lie on the Extracellular side of the membrane. N-linked (GlcNAc...) asparagine glycosylation is found at Asn70, Asn110, Asn129, Asn213, Asn242, Asn312, and Asn342. The helical transmembrane segment at 435-455 (IALVPLIVLLGQIVTGILLAG) threads the bilayer. Residues 456–555 (GLICTCWYPT…SEDSPDVVVR (100 aa)) lie on the Cytoplasmic side of the membrane.

This sequence belongs to the CD36 family.

It is found in the cell membrane. Functionally, (Microbial infection) Plays a role in mycobacterial infection. Mediates infection by M.fortuitum and uptake of M.smegmatis. The protein is Protein peste of Drosophila melanogaster (Fruit fly).